The sequence spans 149 residues: Nucleoside diphosphate kinase (149 aa).

ATP contacts are provided by lysine 9, phenylalanine 57, arginine 85, threonine 91, arginine 102, and asparagine 112. Histidine 115 serves as the catalytic Pros-phosphohistidine intermediate.

This sequence belongs to the NDK family. Homotetramer. Mg(2+) serves as cofactor.

The protein resides in the cytoplasm. The catalysed reaction is dZDP + ATP = dZTP + ADP. It carries out the reaction a 2'-deoxyribonucleoside 5'-diphosphate + ATP = a 2'-deoxyribonucleoside 5'-triphosphate + ADP. It catalyses the reaction a ribonucleoside 5'-diphosphate + ATP = a ribonucleoside 5'-triphosphate + ADP. It participates in purine metabolism. Its function is as follows. Major role in the synthesis of nucleoside triphosphates other than ATP. The ATP gamma phosphate is transferred to the NDP beta phosphate via a ping-pong mechanism, using a phosphorylated active-site intermediate. In terms of biological role, (Microbial infection) Catalyzes the phosphorylation of dZDP to dZTP, when the bacterium is infected by a phage that produces the substrate for the synthesis of dZTP (2- amino-2'-deoxyadenosine 5'-triphosphate), which is then used by the phage as a DNA polymerase substrate. In Picosynechococcus sp. (strain ATCC 27264 / PCC 7002 / PR-6) (Agmenellum quadruplicatum), this protein is Nucleoside diphosphate kinase.